Reading from the N-terminus, the 129-residue chain is Follitropin subunit beta (129 aa).

A signal peptide spans 1–20 (MKTLQFFFLFCCWKAICCNS). Disulfide bonds link Cys-21/Cys-69, Cys-35/Cys-84, Cys-38/Cys-122, Cys-46/Cys-100, Cys-50/Cys-102, and Cys-105/Cys-112. Asn-25 and Asn-42 each carry an N-linked (GlcNAc...) asparagine glycan.

This sequence belongs to the glycoprotein hormones subunit beta family. Heterodimer. The active follitropin is a heterodimer composed of an alpha chain/CGA shared with other hormones and a unique beta chain/FSHB shown here.

The protein localises to the secreted. In terms of biological role, together with the alpha chain CGA constitutes follitropin, the follicle-stimulating hormone, and provides its biological specificity to the hormone heterodimer. Binds FSHR, a G protein-coupled receptor, on target cells to activate downstream signaling pathways. Follitropin is involved in follicle development and spermatogenesis in reproductive organs. The sequence is that of Follitropin subunit beta (FSHB) from Gorilla gorilla gorilla (Western lowland gorilla).